Here is an 867-residue protein sequence, read N- to C-terminus: MFFEILIGASTKAVKDFISHCYSRLKSIYYCFKRWLMEISGQFKAHDAFVNMCFGHMADIEDFEAELAEEFAEREDEVEEARSLLKLLVAQKSKTGVTEAWTDFFTKSRGGVYAPLSCEPTRQDLEVKSEKLEKLLEEQHQFEVRAAKKYIKEKGRGFINCWNDLRSRLRLVKDVKDEAKDNARAAAKIGAEMFAPVDVQDLYSFTEVKKVETGLMKEVVKERNGEEEKHLEPIMEEVRSIKDTAEARDAASTWITETIKLKNSTLNADELSLATIARYVENVGDKFKLDIASKTYLKQVASMSVPIPTNKDIKLKMVLQSPEARARRERMDVLDSVGFLEGLCTASGFESPFPILGLPEIAVTDGARLRKVSCNIRYLSQTHLGLVYKAPNASLHNALVAVERRVYTVGKGDKAIYPPRPEHDIFTDTMDYFQKSIIEEVGYCKTYPAQLLANSYSAGKRAMYHKAIASLRTIPYHQKDANVQAFLKKEKHWMTKDIAPRLICPRSKRYNIILGTRLKFNEKKIMHAIDSVFGSPTVLSGYDNFKQGRIIAKKWQKFACPVAIGVDASRFDQHVSEQALKWEHGIYNGVFGDSELALALEHQITNNIKMFVEDKMLRFKVRGHRMSGDINTSMGNKLIMCGMMHAYFKKLGVEAELCNNGDDCVIITDRANEKLFDGMYDHFLRYGFNMVTEKPVYELEQLEFCQSKPVSINGKYRMVRRPDSIGKDSTTLLSMLNQSDVKSYMSAVAQCGLVLNAGVPILESFYKCLYRSSGYKKVSEEFIKNVISYGTDERLQGRRTFQDTPITNHSRMSYWESFGVDPKIQQIVERYYDNLTVSAQLQSVKVTTPHLQSILLSIPENHSHNEY.

The RdRp catalytic domain maps to Pro-561 to Phe-676.

Belongs to the luteoviruses RNA polymerase family.

The catalysed reaction is RNA(n) + a ribonucleoside 5'-triphosphate = RNA(n+1) + diphosphate. Probable polymerase. The protein is Putative RNA-directed RNA polymerase of Barley yellow dwarf virus (isolate MAV) (BYDV).